The chain runs to 95 residues: Co-chaperonin GroES (95 aa).

Belongs to the GroES chaperonin family. As to quaternary structure, heptamer of 7 subunits arranged in a ring. Interacts with the chaperonin GroEL.

It is found in the cytoplasm. Its function is as follows. Together with the chaperonin GroEL, plays an essential role in assisting protein folding. The GroEL-GroES system forms a nano-cage that allows encapsulation of the non-native substrate proteins and provides a physical environment optimized to promote and accelerate protein folding. GroES binds to the apical surface of the GroEL ring, thereby capping the opening of the GroEL channel. The polypeptide is Co-chaperonin GroES (Rickettsia bellii (strain RML369-C)).